Here is a 224-residue protein sequence, read N- to C-terminus: PKHD-type hydroxylase Sbal195_0750 (224 aa).

One can recognise a Fe2OG dioxygenase domain in the interval 78-176 (QFYPPLFNRY…RTAAFMWLQS (99 aa)). Fe cation contacts are provided by His96, Asp98, and His157. Residue Arg167 coordinates 2-oxoglutarate.

Requires Fe(2+) as cofactor. L-ascorbate serves as cofactor.

This is PKHD-type hydroxylase Sbal195_0750 from Shewanella baltica (strain OS195).